A 157-amino-acid chain; its full sequence is Ribonuclease H (157 aa).

Positions 1–146 (MPELFAYTDG…ADALAREGMA (146 aa)) constitute an RNase H type-1 domain. Positions 9, 52, 74, and 138 each coordinate Mg(2+).

The protein belongs to the RNase H family. In terms of assembly, monomer. Requires Mg(2+) as cofactor.

It localises to the cytoplasm. It carries out the reaction Endonucleolytic cleavage to 5'-phosphomonoester.. Functionally, endonuclease that specifically degrades the RNA of RNA-DNA hybrids. The sequence is that of Ribonuclease H from Dinoroseobacter shibae (strain DSM 16493 / NCIMB 14021 / DFL 12).